Reading from the N-terminus, the 479-residue chain is Glutathione gamma-glutamylcysteinyltransferase 3 (479 aa).

The Peptidase C83 domain maps to 1–221; sequence MASAGLYRRV…GYMIISKLKR (221 aa). Catalysis depends on residues Cys56, His162, and Asp180.

This sequence belongs to the phytochelatin synthase family. Expressed in roots, nodules and leaves.

It catalyses the reaction [Glu(-Cys)](n)-Gly + glutathione + H(+) = [Glu(-Cys)](n+1)-Gly + glycine. Its activity is regulated as follows. Requires cadmium for activity. In terms of biological role, involved in the synthesis of phytochelatins (PC) and homophytochelatins (hPC), the heavy-metal-binding peptides of plants. The polypeptide is Glutathione gamma-glutamylcysteinyltransferase 3 (PCS3) (Lotus japonicus (Lotus corniculatus var. japonicus)).